The primary structure comprises 340 residues: C5a anaphylatoxin chemotactic receptor 1 (340 aa).

Over 1–30 the chain is Extracellular; it reads TPDYGHYDDKDTLDANTPVDKTSNTLRVPD. Positions 3–11 are required for CHIPS binding; sequence DYGHYDDKD. Tyrosine 4 and tyrosine 7 each carry sulfotyrosine. The segment at 14–23 is involved in C5a binding; sequence DANTPVDKTS. A helical membrane pass occupies residues 31–57; it reads ILALVIFAVVFLVGVLRNALVVWVTAF. Over 58–62 the chain is Cytoplasmic; that stretch reads EAKRT. The helical transmembrane segment at 63–86 threads the bilayer; sequence INAIWFLNLAVADFLSCLALPILF. Residues 87–103 lie on the Extracellular side of the membrane; the sequence is TSIVQHHHWPFGGAACR. Cysteine 102 and cysteine 181 are oxidised to a cystine. The helical transmembrane segment at 104–125 threads the bilayer; the sequence is ILPSLILLNMYASILLLATISA. Over 126 to 146 the chain is Cytoplasmic; that stretch reads DRFLLVFNPIWCQNFRGAGLA. The helical transmembrane segment at 147 to 167 threads the bilayer; sequence WIACAVAWGLALLLTIPSFLY. Residues 168–193 lie on the Extracellular side of the membrane; sequence RVVREEYFPPKVLCGVDHGHDKRRER. Residues 194-219 form a helical membrane-spanning segment; it reads AVAIARLVLGFVWPLLTLTMCYTFLL. Over 220–235 the chain is Cytoplasmic; the sequence is LRTWSRRATRSTKTLK. The helical transmembrane segment at 236 to 258 threads the bilayer; it reads VVVAVVASFFIFWLPYQVTGMMM. At 259-275 the chain is on the extracellular side; sequence SFLEPSSPTFLLLKKLD. Residues 276–296 form a helical membrane-spanning segment; it reads SLCISFAYINCCINPIIYVVA. Residues 297 to 340 are Cytoplasmic-facing; sequence GQGFQGRLRKSLPSLLRNVLTEESMVRESKSFTRSTVDTMAQKT. Phosphoserine is present on residues serine 307, serine 310, serine 320, serine 325, serine 327, and serine 331.

This sequence belongs to the G-protein coupled receptor 1 family. In terms of assembly, homodimer. May also form higher-order oligomers. Interacts (when phosphorylated) with ARRB1 and ARRB2; the interaction is associated with internalization of C5aR. Interacts (via N-terminal domain) with S.aureus chemotaxis inhibitory protein (CHIPS); the interaction blocks the receptor and may thus inhibit the immune response. Sulfation plays a critical role in the association of C5aR with C5a, but no significant role in the ability of the receptor to transduce a signal and mobilize calcium in response to a small peptide agonist. Sulfation at Tyr-7 is important for CHIPS binding. Post-translationally, phosphorylated on serine residues in response to C5a binding, resulting in internalization of the receptor and short-term desensitization to C5a.

The protein localises to the cell membrane. Its subcellular location is the cytoplasmic vesicle. In terms of biological role, receptor for the chemotactic and inflammatory peptide anaphylatoxin C5a. The ligand interacts with at least two sites on the receptor: a high-affinity site on the extracellular N-terminus, and a second site in the transmembrane region which activates downstream signaling events. Receptor activation stimulates chemotaxis, granule enzyme release, intracellular calcium release and superoxide anion production. This chain is C5a anaphylatoxin chemotactic receptor 1 (C5AR1), found in Macaca mulatta (Rhesus macaque).